The primary structure comprises 398 residues: Succinate--CoA ligase [ADP-forming] subunit beta (398 aa).

An ATP-grasp domain is found at Lys-9–Glu-254. ATP contacts are provided by residues Lys-46, Gly-53 to Gly-55, Glu-109, Ala-112, and Glu-117. Mg(2+)-binding residues include Asn-209 and Asp-223. Substrate-binding positions include Asn-274 and Gly-331–Met-333.

Belongs to the succinate/malate CoA ligase beta subunit family. As to quaternary structure, heterotetramer of two alpha and two beta subunits. Requires Mg(2+) as cofactor.

It catalyses the reaction succinate + ATP + CoA = succinyl-CoA + ADP + phosphate. The enzyme catalyses GTP + succinate + CoA = succinyl-CoA + GDP + phosphate. The protein operates within carbohydrate metabolism; tricarboxylic acid cycle; succinate from succinyl-CoA (ligase route): step 1/1. In terms of biological role, succinyl-CoA synthetase functions in the citric acid cycle (TCA), coupling the hydrolysis of succinyl-CoA to the synthesis of either ATP or GTP and thus represents the only step of substrate-level phosphorylation in the TCA. The beta subunit provides nucleotide specificity of the enzyme and binds the substrate succinate, while the binding sites for coenzyme A and phosphate are found in the alpha subunit. The sequence is that of Succinate--CoA ligase [ADP-forming] subunit beta from Brucella anthropi (strain ATCC 49188 / DSM 6882 / CCUG 24695 / JCM 21032 / LMG 3331 / NBRC 15819 / NCTC 12168 / Alc 37) (Ochrobactrum anthropi).